A 340-amino-acid chain; its full sequence is tRNA N6-adenosine threonylcarbamoyltransferase (340 aa).

Positions 115 and 119 each coordinate Fe cation. Residues 138–142 (VVSGG), Asp-171, Gly-184, Asp-188, and Asn-278 contribute to the substrate site. Position 306 (Asp-306) interacts with Fe cation.

This sequence belongs to the KAE1 / TsaD family. Fe(2+) is required as a cofactor.

The protein localises to the cytoplasm. The enzyme catalyses L-threonylcarbamoyladenylate + adenosine(37) in tRNA = N(6)-L-threonylcarbamoyladenosine(37) in tRNA + AMP + H(+). Required for the formation of a threonylcarbamoyl group on adenosine at position 37 (t(6)A37) in tRNAs that read codons beginning with adenine. Is involved in the transfer of the threonylcarbamoyl moiety of threonylcarbamoyl-AMP (TC-AMP) to the N6 group of A37, together with TsaE and TsaB. TsaD likely plays a direct catalytic role in this reaction. The sequence is that of tRNA N6-adenosine threonylcarbamoyltransferase from Clostridium botulinum (strain Hall / ATCC 3502 / NCTC 13319 / Type A).